Here is a 153-residue protein sequence, read N- to C-terminus: Superoxide dismutase [Cu-Zn] (153 aa).

Cu cation contacts are provided by histidine 46, histidine 48, and histidine 63. Cysteine 57 and cysteine 146 are disulfide-bonded. Histidine 63, histidine 71, histidine 80, and aspartate 83 together coordinate Zn(2+). Cu cation is bound at residue histidine 120.

It belongs to the Cu-Zn superoxide dismutase family. In terms of assembly, homodimer. Cu cation serves as cofactor. Requires Zn(2+) as cofactor.

The protein resides in the cytoplasm. It carries out the reaction 2 superoxide + 2 H(+) = H2O2 + O2. Its function is as follows. Destroys radicals which are normally produced within the cells and which are toxic to biological systems. The protein is Superoxide dismutase [Cu-Zn] (SODCC) of Solidago canadensis var. scabra (Tall goldenrod).